Here is a 453-residue protein sequence, read N- to C-terminus: Tubulin alpha chain (453 aa).

GTP is bound at residue glutamine 11. Lysine 40 is modified (N6-acetyllysine). GTP-binding residues include glutamate 71, glycine 144, threonine 145, threonine 179, asparagine 206, and asparagine 228. Glutamate 71 is a binding site for Mg(2+). Glutamate 254 is an active-site residue.

It belongs to the tubulin family. As to quaternary structure, dimer of alpha and beta chains. A typical microtubule is a hollow water-filled tube with an outer diameter of 25 nm and an inner diameter of 15 nM. Alpha-beta heterodimers associate head-to-tail to form protofilaments running lengthwise along the microtubule wall with the beta-tubulin subunit facing the microtubule plus end conferring a structural polarity. Microtubules usually have 13 protofilaments but different protofilament numbers can be found in some organisms and specialized cells. Requires Mg(2+) as cofactor. In terms of processing, undergoes a tyrosination/detyrosination cycle, the cyclic removal and re-addition of a C-terminal tyrosine residue by the enzymes tubulin tyrosine carboxypeptidase (TTCP) and tubulin tyrosine ligase (TTL), respectively. Post-translationally, acetylation of alpha chains at Lys-40 stabilizes microtubules and affects affinity and processivity of microtubule motors. This modification has a role in multiple cellular functions, ranging from cell motility, cell cycle progression or cell differentiation to intracellular trafficking and signaling.

The protein resides in the cytoplasm. Its subcellular location is the cytoskeleton. The enzyme catalyses GTP + H2O = GDP + phosphate + H(+). In terms of biological role, tubulin is the major constituent of microtubules, a cylinder consisting of laterally associated linear protofilaments composed of alpha- and beta-tubulin heterodimers. Microtubules grow by the addition of GTP-tubulin dimers to the microtubule end, where a stabilizing cap forms. Below the cap, tubulin dimers are in GDP-bound state, owing to GTPase activity of alpha-tubulin. The polypeptide is Tubulin alpha chain (Plasmodium falciparum (isolate K1 / Thailand)).